The following is a 149-amino-acid chain: Transcription factor HY5-like (149 aa).

A disordered region spans residues 1 to 77 (MSLQRPNGNS…RRRGRNPVDK (77 aa)). Residues 23 to 36 (ESDEELLMVPDMEA) form an interaction with COP1 region. Ser-24 carries the post-translational modification Phosphoserine. Over residues 55-64 (ELDQTQNGVS) the composition is skewed to polar residues. A bZIP domain is found at 78–141 (EYRSLKRLLR…TMLRKMLINT (64 aa)). Residues 80 to 100 (RSLKRLLRNRVSAQQARERKK) are basic motif. Residues 106-134 (LESRANELQNNNDQLEEKISTLTNENTML) are leucine-zipper.

Belongs to the bZIP family. As to quaternary structure, heterodimer; heterodimerizes with HY5 via the leucine-zipper domains. Interacts with COP1 WD40 domain. Interacts with BBX24/STO and BBX25/STH. Ubiquitinated by COP1. Ubiquitination takes place in darkness and leads to its subsequent degradation, thereby preventing the activation of photomorphogenesis signals.

It localises to the nucleus. In terms of biological role, transcription factor that promotes photomorphogenesis in light. Acts downstream of the light receptor network and directly affects transcription of light-induced genes. Specifically involved in the blue light specific pathway, suggesting that it participates in transmission of cryptochromes (CRY1 and CRY2) signals to downstream responses. In darkness, its degradation prevents the activation of light-induced genes. The sequence is that of Transcription factor HY5-like (HYH) from Arabidopsis thaliana (Mouse-ear cress).